The chain runs to 197 residues: MRTGRIERNTAETRILIEVNLDGRGNYDVSTGIGFLDHMVEQFSKHSLIDVTMKVDGDLHVDQHHTTEDSAIALGQALGEALGDKAGIGRYGQAYSPMDETLSRVALDISGRPYTVFRAGFSQEKLGEWDTELIEHWFQSVAQAAGITLHIELLYGTNNHHICESIYKGFARAMRQAVELDGRKGGAIPSTKGQLGG.

Belongs to the imidazoleglycerol-phosphate dehydratase family.

Its subcellular location is the cytoplasm. The catalysed reaction is D-erythro-1-(imidazol-4-yl)glycerol 3-phosphate = 3-(imidazol-4-yl)-2-oxopropyl phosphate + H2O. Its pathway is amino-acid biosynthesis; L-histidine biosynthesis; L-histidine from 5-phospho-alpha-D-ribose 1-diphosphate: step 6/9. The sequence is that of Imidazoleglycerol-phosphate dehydratase from Erythrobacter litoralis (strain HTCC2594).